The chain runs to 285 residues: Probable endonuclease 4 (285 aa).

Residues His-69, His-109, Glu-145, Asp-179, His-182, His-216, Asp-229, His-231, and Glu-261 each coordinate Zn(2+).

The protein belongs to the AP endonuclease 2 family. The cofactor is Zn(2+).

It carries out the reaction Endonucleolytic cleavage to 5'-phosphooligonucleotide end-products.. Its function is as follows. Endonuclease IV plays a role in DNA repair. It cleaves phosphodiester bonds at apurinic or apyrimidinic (AP) sites, generating a 3'-hydroxyl group and a 5'-terminal sugar phosphate. This chain is Probable endonuclease 4, found in Escherichia coli (strain SMS-3-5 / SECEC).